The following is a 94-amino-acid chain: Large ribosomal subunit protein uL23 (94 aa).

Belongs to the universal ribosomal protein uL23 family. As to quaternary structure, part of the 50S ribosomal subunit. Contacts protein L29, and trigger factor when it is bound to the ribosome.

Functionally, one of the early assembly proteins it binds 23S rRNA. One of the proteins that surrounds the polypeptide exit tunnel on the outside of the ribosome. Forms the main docking site for trigger factor binding to the ribosome. The chain is Large ribosomal subunit protein uL23 from Latilactobacillus sakei subsp. sakei (strain 23K) (Lactobacillus sakei subsp. sakei).